The sequence spans 723 residues: 1,3-alpha-isomaltosidase (723 aa).

Asp451 acts as the Nucleophile in catalysis. The active site involves Glu454. The active-site Proton donor is the Asp516. Position 581 (His581) interacts with substrate.

The protein belongs to the glycosyl hydrolase 31 family.

It is found in the cytoplasm. The catalysed reaction is cyclobis-(1-&gt;3)-alpha-D-isomaltosyl + 2 H2O = 2 isomaltose. Functionally, involved in the intracellular degradation of the cyclic tetrasaccharide cyclobis-(1-6)-alpha-nigerosyl (CNN) formed extracellularly from starch. Catalyzes the hydrolysis of the alpha-1,3-glucosidic linkage of cyclobis-(1-6)-alpha-nigerosyl (CNN) to yield isomaltose via a possible linear tetrasaccharide. It has a strong preference for the alpha-(1-3)-isomaltosyl moiety. This is 1,3-alpha-isomaltosidase from Kribbella flavida (strain DSM 17836 / JCM 10339 / NBRC 14399).